Consider the following 333-residue polypeptide: MQSWDPCLTPLELHGALFLHGPYWTPGLFRLIALGTCGDSCTHVRQPPKTWMGATVFVQPLDLVKNRMQLSGEGAKTREYKTSFHALTSILRAEGLRGIYTGLSAGLLRQATYTTTRLGIYTVLFERLTGADGTPPGFLLKALIGMTAGATGAFVGTPAEVALIRMTADGRLPPDQRRGYKNVFDALIRIVREEGVPTLWRGCIPTMARAVVVNAAQLASYSQSKQFLLDSGYFSDNILCHFCASMISGLVTTAASMPVDIAKTRIQNMRTIDGKPEYKNGLDVLVKVIRYEGFFSLWKGFTPYYARLGPHTVLTFIFLEQMNKAYKRLFLSG.

3 Solcar repeats span residues Phe-29 to Arg-127, Pro-136 to Phe-227, and Asp-236 to Ala-325. A run of 6 helical transmembrane segments spans residues Arg-30 to Leu-61, Gly-102 to Ile-120, Phe-138 to Ala-159, Gly-202 to Tyr-221, His-241 to Val-259, and Gly-300 to Leu-319.

This sequence belongs to the mitochondrial carrier (TC 2.A.29) family. In terms of assembly, interacts with SMIM26.

It localises to the membrane. The catalysed reaction is (S)-malate(in) + 2-oxoglutarate(out) = (S)-malate(out) + 2-oxoglutarate(in). It catalyses the reaction malonate(in) + 2-oxoglutarate(out) = malonate(out) + 2-oxoglutarate(in). It carries out the reaction succinate(in) + 2-oxoglutarate(out) = succinate(out) + 2-oxoglutarate(in). The enzyme catalyses maleate(in) + 2-oxoglutarate(out) = maleate(out) + 2-oxoglutarate(in). The catalysed reaction is oxaloacetate(in) + 2-oxoglutarate(out) = oxaloacetate(out) + 2-oxoglutarate(in). In terms of biological role, catalyzes the transport of 2-oxoglutarate (alpha-oxoglutarate) across the inner mitochondrial membrane in an electroneutral exchange for malate. Can also exchange 2-oxoglutarate for other dicarboxylic acids such as malonate, succinate, maleate and oxaloacetate, although with lower affinity. Contributes to several metabolic processes, including the malate-aspartate shuttle, the oxoglutarate/isocitrate shuttle, in gluconeogenesis from lactate, and in nitrogen metabolism. Maintains mitochondrial fusion and fission events, and the organization and morphology of cristae. Involved in the regulation of apoptosis. Helps protect from cytotoxic-induced apoptosis by modulating glutathione levels in mitochondria. This Sus scrofa (Pig) protein is Mitochondrial 2-oxoglutarate/malate carrier protein (SLC25A11).